Reading from the N-terminus, the 165-residue chain is Phosphopantetheine adenylyltransferase (165 aa).

Threonine 10 contacts substrate. ATP-binding positions include threonine 10–phenylalanine 11 and histidine 18. The substrate site is built by lysine 42, leucine 75, and arginine 89. ATP contacts are provided by residues glycine 90–arginine 92, glutamate 100, and tyrosine 125–serine 131.

This sequence belongs to the bacterial CoaD family. Homohexamer. Mg(2+) is required as a cofactor.

It localises to the cytoplasm. The enzyme catalyses (R)-4'-phosphopantetheine + ATP + H(+) = 3'-dephospho-CoA + diphosphate. Its pathway is cofactor biosynthesis; coenzyme A biosynthesis; CoA from (R)-pantothenate: step 4/5. In terms of biological role, reversibly transfers an adenylyl group from ATP to 4'-phosphopantetheine, yielding dephospho-CoA (dPCoA) and pyrophosphate. In Chlorobium phaeobacteroides (strain BS1), this protein is Phosphopantetheine adenylyltransferase.